The primary structure comprises 154 residues: GTP-dependent dephospho-CoA kinase (154 aa).

GTP-binding residues include D34, D53, and E107.

It belongs to the GTP-dependent DPCK family.

It carries out the reaction 3'-dephospho-CoA + GTP = GDP + CoA + H(+). It functions in the pathway cofactor biosynthesis; coenzyme A biosynthesis. In terms of biological role, catalyzes the GTP-dependent phosphorylation of the 3'-hydroxyl group of dephosphocoenzyme A to form coenzyme A (CoA). In Nitrosopumilus maritimus (strain SCM1), this protein is GTP-dependent dephospho-CoA kinase.